The primary structure comprises 212 residues: Small ribosomal subunit protein uS5 (212 aa).

In terms of domain architecture, S5 DRBM spans 48 to 111 (LDDEVLDINM…EVAKLNIIDV (64 aa)).

The protein belongs to the universal ribosomal protein uS5 family. As to quaternary structure, part of the 30S ribosomal subunit. Contacts protein S4.

Functionally, with S4 and S12 plays an important role in translational accuracy. This is Small ribosomal subunit protein uS5 from Halobacterium salinarum (strain ATCC 700922 / JCM 11081 / NRC-1) (Halobacterium halobium).